The sequence spans 494 residues: Cobyric acid synthase (494 aa).

The 197-residue stretch at 248-444 (EIEIAIIKLP…LHGIFENDEW (197 aa)) folds into the GATase cobBQ-type domain. C329 serves as the catalytic Nucleophile. The active site involves H436.

This sequence belongs to the CobB/CobQ family. CobQ subfamily.

Its pathway is cofactor biosynthesis; adenosylcobalamin biosynthesis. Functionally, catalyzes amidations at positions B, D, E, and G on adenosylcobyrinic A,C-diamide. NH(2) groups are provided by glutamine, and one molecule of ATP is hydrogenolyzed for each amidation. This is Cobyric acid synthase from Prochlorococcus marinus (strain NATL1A).